A 314-amino-acid chain; its full sequence is ATP synthase gamma chain (314 aa).

This sequence belongs to the ATPase gamma chain family. As to quaternary structure, F-type ATPases have 2 components, CF(1) - the catalytic core - and CF(0) - the membrane proton channel. CF(1) has five subunits: alpha(3), beta(3), gamma(1), delta(1), epsilon(1). CF(0) has three main subunits: a, b and c.

The protein resides in the cellular thylakoid membrane. In terms of biological role, produces ATP from ADP in the presence of a proton gradient across the membrane. The gamma chain is believed to be important in regulating ATPase activity and the flow of protons through the CF(0) complex. The sequence is that of ATP synthase gamma chain from Synechococcus sp. (strain JA-2-3B'a(2-13)) (Cyanobacteria bacterium Yellowstone B-Prime).